Consider the following 178-residue polypeptide: Large ribosomal subunit protein uL10 (178 aa).

This sequence belongs to the universal ribosomal protein uL10 family. Part of the ribosomal stalk of the 50S ribosomal subunit. The N-terminus interacts with L11 and the large rRNA to form the base of the stalk. The C-terminus forms an elongated spine to which L12 dimers bind in a sequential fashion forming a multimeric L10(L12)X complex.

Functionally, forms part of the ribosomal stalk, playing a central role in the interaction of the ribosome with GTP-bound translation factors. The sequence is that of Large ribosomal subunit protein uL10 from Dictyoglomus turgidum (strain DSM 6724 / Z-1310).